Here is a 548-residue protein sequence, read N- to C-terminus: T-complex protein 1 subunit theta (548 aa).

Residue Ala-2 is modified to N-acetylalanine. ADP is bound by residues Tyr-47 and Gly-48. Asp-99 provides a ligand contact to Mg(2+). Positions 100, 101, 102, 103, 169, 170, 171, 412, and 499 each coordinate ADP. ATP-binding residues include Gly-100, Thr-101, and Asn-102. ATP is bound by residues Ser-170, Lys-171, Gly-412, Asp-499, and Lys-504. Position 505 is a phosphotyrosine (Tyr-505). A disordered region spans residues 529-548 (PAGGPKPPSGKKDWDEDQND).

Component of the chaperonin-containing T-complex (TRiC), a hexadecamer composed of two identical back-to-back stacked rings enclosing a protein folding chamber. Each ring is made up of eight different subunits: TCP1/CCT1, CCT2, CCT3, CCT4, CCT5, CCT6A/CCT6, CCT7, CCT8.

It is found in the cytoplasm. Its subcellular location is the cytoskeleton. The protein resides in the microtubule organizing center. The protein localises to the centrosome. It localises to the cilium basal body. It catalyses the reaction ATP + H2O = ADP + phosphate + H(+). In terms of biological role, component of the chaperonin-containing T-complex (TRiC), a molecular chaperone complex that assists the folding of actin, tubulin and other proteins upon ATP hydrolysis. The sequence is that of T-complex protein 1 subunit theta from Gallus gallus (Chicken).